The chain runs to 320 residues: GTPase Era (320 aa).

The 169-residue stretch at 25 to 193 (HCGFIAIVGR…RKHVRNHLPK (169 aa)) folds into the Era-type G domain. The interval 33–40 (GRPNVGKS) is G1. 33-40 (GRPNVGKS) serves as a coordination point for GTP. The interval 59-63 (QTTRH) is G2. The tract at residues 80–83 (DTPG) is G3. GTP is bound by residues 80 to 84 (DTPGL) and 142 to 145 (NKVD). The G4 stretch occupies residues 142–145 (NKVD). The segment at 172–174 (ISA) is G5. A KH type-2 domain is found at 216-302 (VREKLMRFTG…YLETWVKVKS (87 aa)).

The protein belongs to the TRAFAC class TrmE-Era-EngA-EngB-Septin-like GTPase superfamily. Era GTPase family. As to quaternary structure, monomer.

The protein localises to the cytoplasm. It localises to the cell inner membrane. Its function is as follows. An essential GTPase that binds both GDP and GTP, with rapid nucleotide exchange. Plays a role in 16S rRNA processing and 30S ribosomal subunit biogenesis and possibly also in cell cycle regulation and energy metabolism. The polypeptide is GTPase Era (Vibrio parahaemolyticus serotype O3:K6 (strain RIMD 2210633)).